A 441-amino-acid chain; its full sequence is Zinc finger and BTB domain-containing protein 8A (441 aa).

The region spanning 24 to 92 (CDCSILVEGK…VYSGKLSLTG (69 aa)) is the BTB domain. Composition is skewed to polar residues over residues 143 to 170 (NGVE…SPEQ) and 178 to 196 (KSWN…TQQP). The segment at 143–251 (NGVERSSFYS…QSEEQAQIDA (109 aa)) is disordered. Ser-161 and Ser-167 each carry phosphoserine. Glycyl lysine isopeptide (Lys-Gly) (interchain with G-Cter in SUMO2) cross-links involve residues Lys-178, Lys-182, Lys-191, and Lys-199. A compositionally biased stretch (basic and acidic residues) spans 198 to 208 (AKHEPRKESIK). Low complexity predominate over residues 234-243 (SDSSSHVSQS). 2 C2H2-type zinc fingers span residues 282–304 (FKCP…LRCH) and 310–333 (YPCQ…RTIH). Residue Lys-437 forms a Glycyl lysine isopeptide (Lys-Gly) (interchain with G-Cter in SUMO2) linkage.

Its subcellular location is the nucleus. May be involved in transcriptional regulation. This is Zinc finger and BTB domain-containing protein 8A (ZBTB8A) from Homo sapiens (Human).